The sequence spans 119 residues: Large ribosomal subunit protein bL20 (119 aa).

It belongs to the bacterial ribosomal protein bL20 family.

Binds directly to 23S ribosomal RNA and is necessary for the in vitro assembly process of the 50S ribosomal subunit. It is not involved in the protein synthesizing functions of that subunit. This is Large ribosomal subunit protein bL20 from Teredinibacter turnerae (strain ATCC 39867 / T7901).